A 941-amino-acid chain; its full sequence is Endoplasmic reticulum aminopeptidase 1 (941 aa).

Position 1 (methionine 1) is a topological domain, cytoplasmic. A helical; Signal-anchor for type II membrane protein membrane pass occupies residues 2–21; the sequence is VFLPLKWSLATMSFLLSSLL. The Lumenal segment spans residues 22-941; the sequence is ALLTVSTPSW…WLQSEKLERM (920 aa). Residues asparagine 70 and asparagine 154 are each glycosylated (N-linked (GlcNAc...) asparagine). Substrate-binding positions include glutamate 183 and 317–321; that span reads GAMEN. Histidine 353 serves as a coordination point for Zn(2+). Glutamate 354 serves as the catalytic Proton acceptor. The Zn(2+) site is built by histidine 357 and glutamate 376. 2 cysteine pairs are disulfide-bonded: cysteine 404/cysteine 443 and cysteine 736/cysteine 743. Residue asparagine 414 is glycosylated (N-linked (GlcNAc...) asparagine). N-linked (GlcNAc...) asparagine glycosylation is found at asparagine 760 and asparagine 901.

It belongs to the peptidase M1 family. In terms of assembly, monomer. May also exist as a heterodimer; with ERAP2. Interacts with RBMX. Requires Zn(2+) as cofactor. Post-translationally, N-glycosylated. As to expression, ubiquitous.

It localises to the endoplasmic reticulum membrane. In terms of biological role, aminopeptidase that plays a central role in peptide trimming, a step required for the generation of most HLA class I-binding peptides. Peptide trimming is essential to customize longer precursor peptides to fit them to the correct length required for presentation on MHC class I molecules. Strongly prefers substrates 9-16 residues long. Rapidly degrades 13-mer to a 9-mer and then stops. Preferentially hydrolyzes the residue Leu and peptides with a hydrophobic C-terminus, while it has weak activity toward peptides with charged C-terminus. May play a role in the inactivation of peptide hormones. May be involved in the regulation of blood pressure through the inactivation of angiotensin II and/or the generation of bradykinin in the kidney. This is Endoplasmic reticulum aminopeptidase 1 (ERAP1) from Homo sapiens (Human).